The sequence spans 460 residues: Probable carboxylesterase 11 (460 aa).

2 stretches are compositionally biased toward polar residues: residues 26–35 (QSSGDESSSD) and 132–145 (NSYG…SPEA). 2 disordered regions span residues 26–52 (QSSG…APNP) and 132–161 (NSYG…SSGG). Positions 173–175 (HGG) match the Involved in the stabilization of the negatively charged intermediate by the formation of the oxyanion hole motif. Catalysis depends on residues Ser289, Asp392, and His422.

The protein belongs to the 'GDXG' lipolytic enzyme family. Expressed in roots, leaves, stems, flowers and siliques.

It catalyses the reaction a carboxylic ester + H2O = an alcohol + a carboxylate + H(+). Carboxylesterase acting on esters with varying acyl chain length. The chain is Probable carboxylesterase 11 (CXE11) from Arabidopsis thaliana (Mouse-ear cress).